The following is a 98-amino-acid chain: NADH-ubiquinone oxidoreductase chain 4L (98 aa).

A run of 3 helical transmembrane segments spans residues 1–21, 36–56, and 61–81; these read MVLI…GVLI, MMLS…MFSI, and LILL…LVSI.

The protein belongs to the complex I subunit 4L family.

Its subcellular location is the mitochondrion membrane. It catalyses the reaction a ubiquinone + NADH + 5 H(+)(in) = a ubiquinol + NAD(+) + 4 H(+)(out). In terms of biological role, core subunit of the mitochondrial membrane respiratory chain NADH dehydrogenase (Complex I) which catalyzes electron transfer from NADH through the respiratory chain, using ubiquinone as an electron acceptor. Part of the enzyme membrane arm which is embedded in the lipid bilayer and involved in proton translocation. This Didelphis virginiana (North American opossum) protein is NADH-ubiquinone oxidoreductase chain 4L (MT-ND4L).